A 117-amino-acid polypeptide reads, in one-letter code: MARILTRIKEAEENNQKKEEQVKAELAQYEQLKNNELIDLNKEFQERLTKLMKEKEKNEEEVTEDEQHKLELILEQFRQKVLEIEKTYLEKEEEEIAKKKNLTNEIIERMKQNNGCH.

Positions 1 to 20 are disordered; it reads MARILTRIKEAEENNQKKEE. Positions 7–20 are enriched in basic and acidic residues; that stretch reads RIKEAEENNQKKEE.

Belongs to the V-ATPase G subunit family.

Its function is as follows. Involved in ATP-driven sodium extrusion. This Enterococcus hirae (strain ATCC 9790 / DSM 20160 / JCM 8729 / LMG 6399 / NBRC 3181 / NCIMB 6459 / NCDO 1258 / NCTC 12367 / WDCM 00089 / R) protein is V-type sodium ATPase subunit F (ntpF).